The chain runs to 532 residues: Transcriptional regulatory protein RtcR (532 aa).

One can recognise a Sigma-54 factor interaction domain in the interval 186-424 (IATRNPHFNR…LSASVTRMAT (239 aa)). ATP contacts are provided by residues 215-222 (GPTGAGKS) and 281-290 (ANGGMLFLDE). Positions 485–504 (KSLSAAGRQLFDVSRQGKAS) form a DNA-binding region, H-T-H motif.

In terms of biological role, transcriptional repressor of the rtcAB genes. Interacts with sigma-54. The protein is Transcriptional regulatory protein RtcR (rtcR) of Escherichia coli (strain K12).